A 107-amino-acid chain; its full sequence is Probable antitoxin TacA (107 aa).

The protein belongs to the TacA antitoxin family. In terms of assembly, forms a complex with cognate antitoxin TacT.

In terms of biological role, probable antitoxin component of a type II toxin-antitoxin (TA) system. Should neutralize cognate toxin TacT (y4aS). The polypeptide is Probable antitoxin TacA (Sinorhizobium fredii (strain NBRC 101917 / NGR234)).